Consider the following 340-residue polypeptide: MDSAAPALSPALTALTDQSATADLAIQIPKCPDPERYFYTSQCPDINHLRSLSILNRWLETELVFVGDEEDVSKLSEGELSFYRFLFAFLSAADDLVTENLGGLSGLFEQKDILHYYVEQECIEVVHSRVYNIIQLVLFHNNDQARREYVAGTINHPAIRAKVDWLEARVRECASVPEKFILMILIEGIFFAASFAAIAYLRTNNLLRVTCQSNDLISRDEAVHTTASCYIYNNYLGGHAKPPPDRVYGLFRQAVEIEIGFIRSQAPTDSHILSPAALAAIENYVRFSADRLLGLIHMKPLFSAPPPDASFPLSLMSTDKHTNFFECRSTSYAGAVVNDL.

The chain crosses the membrane as a helical span at residues 180–200 (FILMILIEGIFFAASFAAIAY).

Belongs to the ribonucleoside diphosphate reductase small chain family. In terms of assembly, heterotetramer composed of a homodimer of the large subunit (R1) and a homodimer of the small subunit (R2). Larger multisubunit protein complex are also active, composed of (R1)n(R2)n. Fe cation is required as a cofactor.

The protein localises to the host membrane. The catalysed reaction is a 2'-deoxyribonucleoside 5'-diphosphate + [thioredoxin]-disulfide + H2O = a ribonucleoside 5'-diphosphate + [thioredoxin]-dithiol. Its function is as follows. Ribonucleoside-diphosphate reductase holoenzyme provides the precursors necessary for viral DNA synthesis. Allows virus growth in non-dividing cells, as well as reactivation from latency in infected hosts. Catalyzes the biosynthesis of deoxyribonucleotides from the corresponding ribonucleotides. The polypeptide is Ribonucleoside-diphosphate reductase small subunit (Human herpesvirus 1 (strain 17) (HHV-1)).